The sequence spans 377 residues: Probable staphylococcal-like nuclease CAN3 (377 aa).

A lipid anchor (N-myristoyl glycine) is attached at G2. The S-palmitoyl cysteine moiety is linked to residue C7. Positions 15–57 are disordered; the sequence is GDHYPYYKPTSRPHYQPPHYHGQPAAPPAPPQQQPLGPHGVTP. The segment covering 27-38 has biased composition (low complexity); it reads PHYQPPHYHGQP. A TNase-like domain is found at 177 to 353; sequence NTLPVYDKCI…KAANRGLWAS (177 aa). D190 contacts Ca(2+). Residue R260 is part of the active site. Residue D265 coordinates Ca(2+). Catalysis depends on residues E268 and R302.

The protein belongs to the thermonuclease family. Requires Ca(2+) as cofactor.

It is found in the cell membrane. Functionally, enzyme that catalyzes the hydrolysis of both DNA and RNA at the 5' position of the phosphodiester bond. The protein is Probable staphylococcal-like nuclease CAN3 of Oryza sativa subsp. japonica (Rice).